A 142-amino-acid chain; its full sequence is Cell division protein SepF (142 aa).

This sequence belongs to the SepF family. As to quaternary structure, homodimer. Interacts with FtsZ.

It is found in the cytoplasm. In terms of biological role, cell division protein that is part of the divisome complex and is recruited early to the Z-ring. Probably stimulates Z-ring formation, perhaps through the cross-linking of FtsZ protofilaments. Its function overlaps with FtsA. The sequence is that of Cell division protein SepF from Syntrophomonas wolfei subsp. wolfei (strain DSM 2245B / Goettingen).